Here is a 532-residue protein sequence, read N- to C-terminus: Tyrosine-protein kinase Src-1 (532 aa).

Residues 1 to 52 (MGATKSKPREGGPRSRSLDIVEGSHQPFTSLSASQTPNKSLDSHRPPAQPFG) form a disordered region. Glycine 2 carries the N-myristoyl glycine lipid modification. Basic and acidic residues predominate over residues 7–19 (KPREGGPRSRSLD). Polar residues predominate over residues 26–40 (QPFTSLSASQTPNKS). Residues 80–141 (GGVTTFVALY…PSNYVAPSDS (62 aa)) form the SH3 domain. The SH2 domain maps to 147–244 (WYLGKITRRE…GLCHRLTTVC (98 aa)). Positions 266 to 519 (LRLELKLGQG…YLQAFLEDYF (254 aa)) constitute a Protein kinase domain. ATP is bound by residues 272–280 (LGQGCFGEV) and lysine 294. The active-site Proton acceptor is the aspartate 385. A Phosphotyrosine; by autocatalysis modification is found at tyrosine 415.

It belongs to the protein kinase superfamily. Tyr protein kinase family. SRC subfamily.

Its subcellular location is the cell membrane. The enzyme catalyses L-tyrosyl-[protein] + ATP = O-phospho-L-tyrosyl-[protein] + ADP + H(+). The chain is Tyrosine-protein kinase Src-1 (src-a) from Xenopus laevis (African clawed frog).